Reading from the N-terminus, the 486-residue chain is Receptor-interacting serine/threonine-protein kinase 3 (486 aa).

Ser-2 is subject to Phosphoserine. The region spanning 22–292 (LKKLEFVGKG…DCEPKTNEVY (271 aa)) is the Protein kinase domain. Residues 28–36 (VGKGGFGVV) and Lys-51 each bind ATP. Catalysis depends on Asp-143, which acts as the Proton acceptor. Position 165 is a phosphoserine (Ser-165). Thr-187 is modified (phosphothreonine). The residue at position 204 (Ser-204) is a Phosphoserine; by autocatalysis. The residue at position 231 (Thr-231) is a Phosphothreonine; by autocatalysis. The residue at position 232 (Ser-232) is a Phosphoserine; by autocatalysis. Position 257 is a phosphothreonine (Thr-257). Ser-304 and Ser-326 each carry phosphoserine. Positions 312–333 (QHRSSGRNLSAREPSQRGTEMD) are disordered. Position 338 is a phosphothreonine (Thr-338). The disordered stretch occupies residues 349 to 388 (LEEPSGPVPGKCPERQAQDTSVGPATPARTSSDPVAGTPQ). Phosphoserine is present on residues Ser-353, Ser-369, and Ser-380. Positions 366-381 (QDTSVGPATPARTSSD) are enriched in polar residues. At Thr-392 the chain carries Phosphothreonine. The RIP homotypic interaction motif (RHIM) signature appears at 440–461 (LVFNNCSEVQIGNYNSLVAPPR). Residues 462 to 486 (TTASSSAKYDQAQFGRGRGWQPFHK) form a disordered region. Residue Arg-477 is modified to Omega-N-methylarginine.

It belongs to the protein kinase superfamily. TKL Ser/Thr protein kinase family. Interacts (via RIP homotypic interaction motif) with RIPK1 (via RIP homotypic interaction motif); this interaction induces RIPK1 phosphorylation and formation of a RIPK1-RIPK3 necrosis-inducing complex. Interacts with MLKL; the interaction is direct and triggers necroptosis. Interacts with ZBP1 (via RIP homotypic interaction motif); interaction with ZBP1 activates RIPK3, triggering necroptosis. Upon TNF-induced necrosis, the RIPK1-RIPK3 dimer further interacts with PGAM5 and MLKL; the formation of this complex leads to PGAM5 phosphorylation and increase in PGAM5 phosphatase activity. Binds TRAF2 and is recruited to the TNFR-1 signaling complex. Interacts with PYGL, GLUL and GLUD1; these interactions result in activation of these metabolic enzymes. Interacts with BIRC2/c-IAP1, BIRC3/c-IAP2 and XIAP/BIRC4. Interacts with ARHGEF2. Interacts with PELI1 (via atypical FHA domain); the phosphorylated form at Thr-187 binds preferentially to PELI1. Interacts with BUB1B, TRAF2 and STUB1. Interacts with CASP6. Component of the AIM2 PANoptosome complex, a multiprotein complex that drives inflammatory cell death (PANoptosis). As to quaternary structure, (Microbial infection) Interacts (via RIP homotypic interaction motif) with murid herpesvirus protein RIR1; this interaction disrupts RIP3-RIP1 interactions characteristic of TNF-alpha induced necroptosis, thereby suppressing this death pathway. In terms of processing, RIPK1 and RIPK3 undergo reciprocal auto- and trans-phosphorylation. Autophosphorylated following interaction with ZBP1. Phosphorylation of Ser-204 plays a role in the necroptotic function of RIPK3. Autophosphorylates at Thr-231 and Ser-232 following activation by ZBP1: phosphorylation at these sites is a hallmark of necroptosis and is required for binding MLKL. Phosphorylation at Thr-187 is important for its kinase activity, interaction with PELI1 and for its ability to mediate TNF-induced necroptosis. Post-translationally, polyubiquitinated with 'Lys-48' and 'Lys-63'-linked chains by BIRC2/c-IAP1 and BIRC3/c-IAP2, leading to activation of NF-kappa-B. Ubiquitinated by STUB1 leading to its subsequent proteasome-dependent degradation. As to expression, expressed in embryo and in adult spleen, liver, testis, heart, brain and lung.

The protein localises to the cytoplasm. Its subcellular location is the cytosol. It is found in the nucleus. It catalyses the reaction L-seryl-[protein] + ATP = O-phospho-L-seryl-[protein] + ADP + H(+). It carries out the reaction L-threonyl-[protein] + ATP = O-phospho-L-threonyl-[protein] + ADP + H(+). With respect to regulation, activity is stimulated by ZBP1, which senses double-stranded Z-RNA structures. RIPK3-dependent necroptosis is inhibited by RIPK1: RIPK1 prevents the ZBP1-induced activation of RIPK3 via FADD-mediated recruitment of CASP8, which cleaves RIPK1 and limits TNF-induced necroptosis. Inhibited by type II inhibitor 1-(4-fluorophenyl)-N-[3-fluoro-4-(1H-pyrrolo[2,3-b]pyridin-4-yloxy)phenyl]-2-oxo-1,2-dihydropyridine-3-carboxamide. In terms of biological role, serine/threonine-protein kinase that activates necroptosis and apoptosis, two parallel forms of cell death. Necroptosis, a programmed cell death process in response to death-inducing TNF-alpha family members, is triggered by RIPK3 following activation by ZBP1. Activated RIPK3 forms a necrosis-inducing complex and mediates phosphorylation of MLKL, promoting MLKL localization to the plasma membrane and execution of programmed necrosis characterized by calcium influx and plasma membrane damage. In addition to TNF-induced necroptosis, necroptosis can also take place in the nucleus in response to orthomyxoviruses infection: following ZBP1 activation, which senses double-stranded Z-RNA structures, nuclear RIPK3 catalyzes phosphorylation and activation of MLKL, promoting disruption of the nuclear envelope and leakage of cellular DNA into the cytosol. Also regulates apoptosis: apoptosis depends on RIPK1, FADD and CASP8, and is independent of MLKL and RIPK3 kinase activity. Phosphorylates RIPK1: RIPK1 and RIPK3 undergo reciprocal auto- and trans-phosphorylation. In some cell types, also able to restrict viral replication by promoting cell death-independent responses. In response to flavivirus infection in neurons, promotes a cell death-independent pathway that restricts viral replication: together with ZBP1, promotes a death-independent transcriptional program that modifies the cellular metabolism via up-regulation expression of the enzyme ACOD1/IRG1 and production of the metabolite itaconate. Itaconate inhibits the activity of succinate dehydrogenase, generating a metabolic state in neurons that suppresses replication of viral genomes. RIPK3 binds to and enhances the activity of three metabolic enzymes: GLUL, GLUD1, and PYGL. These metabolic enzymes may eventually stimulate the tricarboxylic acid cycle and oxidative phosphorylation, which could result in enhanced ROS production. In Mus musculus (Mouse), this protein is Receptor-interacting serine/threonine-protein kinase 3.